The primary structure comprises 104 residues: Astakine (104 aa).

The N-terminal stretch at 1–22 is a signal peptide; that stretch reads MKMRGVSVGVLVVAMMSGLAMA. 5 disulfide bridges follow: cysteine 25-cysteine 38, cysteine 32-cysteine 50, cysteine 37-cysteine 76, cysteine 60-cysteine 84, and cysteine 78-cysteine 91.

This sequence belongs to the AVIT (prokineticin) family.

It localises to the secreted. Its function is as follows. Cytokine directly involved in hematopoiesis. This chain is Astakine, found in Pacifastacus leniusculus (Signal crayfish).